The primary structure comprises 373 residues: 3-isopropylmalate dehydrogenase AMT6 (373 aa).

An NADP(+)-binding site is contributed by 77–79 (VGG). Substrate-binding residues include R97 and R136. Mg(2+)-binding residues include D227, D252, and D256. 284–289 (SRIRGL) is an NADP(+) binding site.

It belongs to the isocitrate and isopropylmalate dehydrogenases family. In terms of assembly, homodimer. The cofactor is Mg(2+). It depends on Mn(2+) as a cofactor.

The catalysed reaction is (2R,3S)-3-isopropylmalate + NAD(+) = 4-methyl-2-oxopentanoate + CO2 + NADH. It participates in amino-acid biosynthesis; L-leucine biosynthesis; L-leucine from 3-methyl-2-oxobutanoate: step 3/4. The protein operates within mycotoxin biosynthesis. Functionally, 3-isopropylmalate dehydrogenase; part of the gene clusters that mediate the biosynthesis of AM-toxins, host-selective toxins (HSTs) causing Alternaria blotch on apple, a worldwide distributed disease. AM-toxins are cyclic depsipeptides containing the 3 residues 2-hydroxy-isovaleric acid (2-HIV), dehydroalanine, L-alanine which are common for all 3 AM-toxins I to III. The fourth precursor is L-alpha-amino-methoxyphenyl-valeric acid (L-Amv) for AM-toxin I, L-alpha-amino-phenyl-valeric acid (L-Apv) for AM-toxin II, and L-alpha-amino-hydroxyphenyl-valeric acid (L-Ahv) for AM-toxin III. AM-toxins have two target sites for affecting susceptible apple cells; they cause invagination of the plasma membrane and electrolyte loss and chloroplast disorganization. The non-ribosomal peptide synthetase AMT1 contains 4 catalytic modules and is responsible for activation of each residue in AM-toxin. The aldo-keto reductase AMT2 catalyzes the conversion of 2-keto-isovaleric acid (2-KIV) to 2-hydroxy-isovaleric acid (2-HIV), one of the precursor residues incorporated by AMT1 during AM-toxin biosynthesis, by reduction of its ketone to an alcohol. The cytochrome P450 monooxygenase AMT3 and the thioesterase AMT4 are also important for AM-toxin production, but their exact function within the AM-toxin biosynthesis are not known yet. Up to 21 proteins (including AMT1 to AMT4) are predicted to be involved in AM-toxin biosynthesis since their expression ishighly up-regulated in AM-toxin-producing cultures. This Alternaria alternata (Alternaria rot fungus) protein is 3-isopropylmalate dehydrogenase AMT6.